We begin with the raw amino-acid sequence, 229 residues long: Ribosomal RNA large subunit methyltransferase E (229 aa).

A disordered region spans residues methionine 1–alanine 20. The S-adenosyl-L-methionine site is built by glycine 75, tryptophan 77, aspartate 94, aspartate 110, and aspartate 134. The active-site Proton acceptor is the lysine 174.

This sequence belongs to the class I-like SAM-binding methyltransferase superfamily. RNA methyltransferase RlmE family.

The protein resides in the cytoplasm. It catalyses the reaction uridine(2552) in 23S rRNA + S-adenosyl-L-methionine = 2'-O-methyluridine(2552) in 23S rRNA + S-adenosyl-L-homocysteine + H(+). In terms of biological role, specifically methylates the uridine in position 2552 of 23S rRNA at the 2'-O position of the ribose in the fully assembled 50S ribosomal subunit. The sequence is that of Ribosomal RNA large subunit methyltransferase E from Rhizorhabdus wittichii (strain DSM 6014 / CCUG 31198 / JCM 15750 / NBRC 105917 / EY 4224 / RW1) (Sphingomonas wittichii).